A 360-amino-acid chain; its full sequence is Peptide chain release factor 1 (360 aa).

Gln235 is modified (N5-methylglutamine). Positions 281–307 (ERQRADSERSADRRNQVGSGDRSERIR) are enriched in basic and acidic residues. Residues 281–310 (ERQRADSERSADRRNQVGSGDRSERIRTYN) form a disordered region.

This sequence belongs to the prokaryotic/mitochondrial release factor family. In terms of processing, methylated by PrmC. Methylation increases the termination efficiency of RF1.

The protein resides in the cytoplasm. In terms of biological role, peptide chain release factor 1 directs the termination of translation in response to the peptide chain termination codons UAG and UAA. This Sinorhizobium medicae (strain WSM419) (Ensifer medicae) protein is Peptide chain release factor 1.